The following is a 407-amino-acid chain: Membrane protein MosC (407 aa).

A disordered region spans residues 1–24 (MTRTSPRHHAPSETKRRVPMGGVH). The next 11 helical transmembrane spans lie at 31 to 51 (LTIT…AAWA), 69 to 89 (GVLL…AGYF), 109 to 129 (ALVL…IVLF), 157 to 177 (AFLH…FGVI), 186 to 206 (SVTL…HLLD), 225 to 245 (LLMF…IAEW), 255 to 275 (QVTD…MIAG), 290 to 310 (ALIA…LFMP), 316 to 336 (LAGF…IFSE), 347 to 367 (VGLT…PPII), and 377 to 397 (GRAL…SVFF).

The protein localises to the cell membrane. Its function is as follows. May be a membrane transport protein that could either transport a precursor for rhizopine biosynthesis into bacteroids or the finished product from the bacteroids. The polypeptide is Membrane protein MosC (mosC) (Rhizobium meliloti (Ensifer meliloti)).